Consider the following 906-residue polypeptide: Protein translocase subunit SecA (906 aa).

Residues Gln-86, 104–108 (GEGKT), and Asp-499 contribute to the ATP site. The disordered stretch occupies residues 863 to 887 (PVVSRIDPKDRNPDDPTSWGRVSRN). Zn(2+)-binding residues include Cys-890, Cys-892, Cys-901, and His-902.

This sequence belongs to the SecA family. In terms of assembly, monomer and homodimer. Part of the essential Sec protein translocation apparatus which comprises SecA, SecYEG and auxiliary proteins SecDF-YajC and YidC. The cofactor is Zn(2+).

Its subcellular location is the cell inner membrane. The protein localises to the cytoplasm. It catalyses the reaction ATP + H2O + cellular proteinSide 1 = ADP + phosphate + cellular proteinSide 2.. Functionally, part of the Sec protein translocase complex. Interacts with the SecYEG preprotein conducting channel. Has a central role in coupling the hydrolysis of ATP to the transfer of proteins into and across the cell membrane, serving both as a receptor for the preprotein-SecB complex and as an ATP-driven molecular motor driving the stepwise translocation of polypeptide chains across the membrane. This chain is Protein translocase subunit SecA, found in Rickettsia rickettsii (strain Iowa).